The sequence spans 143 residues: Ribosome-binding factor A (143 aa).

Positions 119–143 (KAKQQQFTPDTPDNSESVDGEKEQD) are disordered. The span at 122–133 (QQQFTPDTPDNS) shows a compositional bias: polar residues.

It belongs to the RbfA family. Monomer. Binds 30S ribosomal subunits, but not 50S ribosomal subunits or 70S ribosomes.

Its subcellular location is the cytoplasm. One of several proteins that assist in the late maturation steps of the functional core of the 30S ribosomal subunit. Associates with free 30S ribosomal subunits (but not with 30S subunits that are part of 70S ribosomes or polysomes). Required for efficient processing of 16S rRNA. May interact with the 5'-terminal helix region of 16S rRNA. The chain is Ribosome-binding factor A from Shewanella frigidimarina (strain NCIMB 400).